A 75-amino-acid chain; its full sequence is Large ribosomal subunit protein bL31 (75 aa).

4 residues coordinate Zn(2+): Cys16, Cys18, Cys36, and Cys39.

Belongs to the bacterial ribosomal protein bL31 family. Type A subfamily. Part of the 50S ribosomal subunit. Zn(2+) serves as cofactor.

Its function is as follows. Binds the 23S rRNA. This is Large ribosomal subunit protein bL31 from Desulforapulum autotrophicum (strain ATCC 43914 / DSM 3382 / VKM B-1955 / HRM2) (Desulfobacterium autotrophicum).